The primary structure comprises 318 residues: Aspartate carbamoyltransferase catalytic subunit (318 aa).

Residues Arg-58 and Thr-59 each coordinate carbamoyl phosphate. Lys-86 contacts L-aspartate. Arg-108, His-141, and Gln-144 together coordinate carbamoyl phosphate. The L-aspartate site is built by Arg-174 and Arg-226. Carbamoyl phosphate contacts are provided by Gly-270 and Pro-271.

It belongs to the aspartate/ornithine carbamoyltransferase superfamily. ATCase family. In terms of assembly, heterododecamer (2C3:3R2) of six catalytic PyrB chains organized as two trimers (C3), and six regulatory PyrI chains organized as three dimers (R2).

The catalysed reaction is carbamoyl phosphate + L-aspartate = N-carbamoyl-L-aspartate + phosphate + H(+). The protein operates within pyrimidine metabolism; UMP biosynthesis via de novo pathway; (S)-dihydroorotate from bicarbonate: step 2/3. In terms of biological role, catalyzes the condensation of carbamoyl phosphate and aspartate to form carbamoyl aspartate and inorganic phosphate, the committed step in the de novo pyrimidine nucleotide biosynthesis pathway. The chain is Aspartate carbamoyltransferase catalytic subunit from Lactobacillus gasseri (strain ATCC 33323 / DSM 20243 / BCRC 14619 / CIP 102991 / JCM 1131 / KCTC 3163 / NCIMB 11718 / NCTC 13722 / AM63).